A 529-amino-acid polypeptide reads, in one-letter code: Cytokinin dehydrogenase 4 (529 aa).

Residues 1 to 27 form the signal peptide; the sequence is MRGAMKPSIVHCLKLLMLLALGGVTMH. One can recognise an FAD-binding PCMH-type domain in the interval 63–244; sequence CSLLPAAVLH…TRARIALEPA (182 aa). FAD contacts are provided by alanine 99, glycine 101, and glycine 103. Pros-8alpha-FAD histidine is present on histidine 104. Residues serine 105, glutamine 109, aspartate 168, threonine 173, serine 179, valine 183, and isoleucine 234 each coordinate FAD. N-linked (GlcNAc...) asparagine glycosylation is found at asparagine 285, asparagine 419, and asparagine 425. The FAD site is built by tyrosine 479 and glutamine 517.

This sequence belongs to the oxygen-dependent FAD-linked oxidoreductase family. Monomer. FAD is required as a cofactor. In terms of tissue distribution, expressed in inflorescence meristems.

The protein localises to the secreted. It localises to the extracellular space. It carries out the reaction N(6)-dimethylallyladenine + A + H2O = 3-methyl-2-butenal + adenine + AH2. Catalyzes the oxidation of cytokinins, a family of N(6)-substituted adenine derivatives that are plant hormones, where the substituent is an isopentenyl group. This is Cytokinin dehydrogenase 4 (CKX4) from Oryza sativa subsp. japonica (Rice).